The primary structure comprises 250 residues: Sugar fermentation stimulation protein homolog (250 aa).

The protein belongs to the SfsA family.

The protein is Sugar fermentation stimulation protein homolog of Trichodesmium erythraeum (strain IMS101).